The following is a 171-amino-acid chain: MNPTSADFVIPPALETAKPFGETEMYRILCDMEKIVPTKHNLNRVKNMSPFWKGDERSYNWFLDFVKSEWGEWIERYARGSHSLSPVTRKNGSPFQMVQAELWSLIHKPTWISSGFISPTCAVCMTNPVWVDFVWSCKHISTCIKCLKMLSRGSNGFKCPICRCQQRVRNY.

The RING-type zinc-finger motif lies at 121-163; the sequence is CAVCMTNPVWVDFVWSCKHISTCIKCLKMLSRGSNGFKCPICR.

It belongs to the IIV-6 157L family.

In Aedes vexans (Inland floodwater mosquito), this protein is Putative RING finger protein 027R.